Reading from the N-terminus, the 100-residue chain is Large ribosomal subunit protein uL23 (100 aa).

This sequence belongs to the universal ribosomal protein uL23 family. Part of the 50S ribosomal subunit. Contacts protein L29, and trigger factor when it is bound to the ribosome.

Its function is as follows. One of the early assembly proteins it binds 23S rRNA. One of the proteins that surrounds the polypeptide exit tunnel on the outside of the ribosome. Forms the main docking site for trigger factor binding to the ribosome. The polypeptide is Large ribosomal subunit protein uL23 (Parasynechococcus marenigrum (strain WH8102)).